The primary structure comprises 237 residues: Orotidine 5'-phosphate decarboxylase (237 aa).

Substrate-binding positions include D11, K34, 61–70 (DLKLHDIPNT), T124, R186, Q195, G215, and R216. K63 (proton donor) is an active-site residue.

The protein belongs to the OMP decarboxylase family. Type 1 subfamily. Homodimer.

The catalysed reaction is orotidine 5'-phosphate + H(+) = UMP + CO2. It functions in the pathway pyrimidine metabolism; UMP biosynthesis via de novo pathway; UMP from orotate: step 2/2. Functionally, catalyzes the decarboxylation of orotidine 5'-monophosphate (OMP) to uridine 5'-monophosphate (UMP). This Lactococcus lactis subsp. cremoris (strain SK11) protein is Orotidine 5'-phosphate decarboxylase.